We begin with the raw amino-acid sequence, 487 residues long: Protein DETOXIFICATION 11 (487 aa).

The next 12 membrane-spanning stretches (helical) occupy residues 35-55, 73-93, 122-142, 151-171, 184-204, 211-231, 264-284, 293-313, 330-350, 377-397, 412-432, and 435-455; these read LICF…LQII, FAIS…SCAL, LVCL…VILG, AGRF…LQPL, LLIT…LLVY, IGGA…LGSF, AAML…SGLL, VLSV…AIAA, AAHI…LMVG, MAPL…LSGV, FGAF…WVHL, and VGLW…LALV.

It belongs to the multi antimicrobial extrusion (MATE) (TC 2.A.66.1) family.

It localises to the membrane. The polypeptide is Protein DETOXIFICATION 11 (Arabidopsis thaliana (Mouse-ear cress)).